We begin with the raw amino-acid sequence, 202 residues long: Protease (202 aa).

Active-site residues include histidine 55, aspartate 72, and cysteine 122.

This sequence belongs to the peptidase C5 family. In terms of assembly, interacts with protease cofactor pVI-C; this interaction is necessary for protease activation.

It is found in the virion. The protein resides in the host nucleus. It carries out the reaction Cleaves proteins of the adenovirus and its host cell at two consensus sites: -Yaa-Xaa-Gly-Gly-|-Xaa- and -Yaa-Xaa-Gly-Xaa-|-Gly- (in which Yaa is Met, Ile or Leu, and Xaa is any amino acid).. With respect to regulation, requires DNA and protease cofactor for maximal activation. Inside nascent virions, becomes partially activated by binding to the viral DNA, allowing it to cleave the cofactor that binds to the protease and fully activates it. Actin, like the viral protease cofactor, seems to act as a cofactor in the cleavage of cytokeratin 18 and of actin itself. In terms of biological role, cleaves viral precursor proteins (pTP, pIIIa, pVI, pVII, pVIII, and pX) inside newly assembled particles giving rise to mature virions. Protease complexed to its cofactor slides along the viral DNA to specifically locate and cleave the viral precursors. Mature virions have a weakened organization compared to the unmature virions, thereby facilitating subsequent uncoating. Without maturation, the particle lacks infectivity and is unable to uncoat. Late in adenovirus infection, in the cytoplasm, may participate in the cytoskeleton destruction. Cleaves host cell cytoskeletal keratins K7 and K18. This Bovine adenovirus 7 (BAdV-7) protein is Protease.